A 190-amino-acid chain; its full sequence is Segregation and condensation protein B (190 aa).

The protein belongs to the ScpB family. As to quaternary structure, homodimer. Homodimerization may be required to stabilize the binding of ScpA to the Smc head domains. Component of a cohesin-like complex composed of ScpA, ScpB and the Smc homodimer, in which ScpA and ScpB bind to the head domain of Smc. The presence of the three proteins is required for the association of the complex with DNA.

The protein localises to the cytoplasm. Its function is as follows. Participates in chromosomal partition during cell division. May act via the formation of a condensin-like complex containing Smc and ScpA that pull DNA away from mid-cell into both cell halves. This chain is Segregation and condensation protein B, found in Bacillus cereus (strain ATCC 14579 / DSM 31 / CCUG 7414 / JCM 2152 / NBRC 15305 / NCIMB 9373 / NCTC 2599 / NRRL B-3711).